Consider the following 179-residue polypeptide: MKLIIGLGNPDPKYQKNRHNVGYMVVDKILENLRLKINKEKFSGIFVKTEEFIIAKPTTYMNLSGDFVKNISTYFKVSPNNILIIYDDMSYEVGQAAIKPKGGSNGQNGIKDILLKMNTEEIPRLKIGIGKNQEAAKHVLSDFTLEEFKIIDLVINQAAEAAISFLFNDIRIVMNSYNK.

Tyr-14 contributes to the tRNA binding site. The active-site Proton acceptor is the His-19. TRNA contacts are provided by Tyr-60, Asn-62, and Asn-108.

The protein belongs to the PTH family. As to quaternary structure, monomer.

The protein localises to the cytoplasm. The enzyme catalyses an N-acyl-L-alpha-aminoacyl-tRNA + H2O = an N-acyl-L-amino acid + a tRNA + H(+). Functionally, hydrolyzes ribosome-free peptidyl-tRNAs (with 1 or more amino acids incorporated), which drop off the ribosome during protein synthesis, or as a result of ribosome stalling. In terms of biological role, catalyzes the release of premature peptidyl moieties from peptidyl-tRNA molecules trapped in stalled 50S ribosomal subunits, and thus maintains levels of free tRNAs and 50S ribosomes. This is Peptidyl-tRNA hydrolase from Mycoplasma mobile (strain ATCC 43663 / 163K / NCTC 11711) (Mesomycoplasma mobile).